Reading from the N-terminus, the 115-residue chain is Thiosulfate:glutathione sulfurtransferase (115 aa).

A Rhodanese domain is found at Ala17–Ser115. Cys79 (cysteine persulfide intermediate) is an active-site residue.

As to expression, highly expressed in kidney, liver and skeletal muscle. Lower levels of expression in heart, colon, thymus, spleen, placenta and lung. Weakly expressed in brain, small intestine and peripheral blood leukocytes. Expressed at high levels in the breast carcinoma cell lines MCF-7 and MDA-MB-468 and at a lower level in the breast carcinoma cell line MDA-MB-231, the colon carcinoma call line LoVo and the lung carcinoma cell line A-549. No expression in the cell lines EFO-27 and HeLa, or the normal breast tissue cell lines MCF-10A and H184A1. Detected in invasive ductal carcinoma, but not in the adjacent tissues.

It is found in the cytoplasm. Its subcellular location is the perinuclear region. The enzyme catalyses thiosulfate + glutathione = S-sulfanylglutathione + sulfite + H(+). It catalyses the reaction thiosulfate + 2 glutathione = glutathione disulfide + hydrogen sulfide + sulfite + 2 H(+). With respect to regulation, GSS(-) is a potent inhibitor of TSTD1, since the presence of the sulfur dioxygenase (SDO) strongly increases the TSTD1 catalytic activity. Thiosulfate:glutathione sulfurtransferase (TST) required to produce S-sulfanylglutathione (GSS(-)), a central intermediate in hydrogen sulfide metabolism. Provides the link between the first step in mammalian H(2)S metabolism performed by the sulfide:quinone oxidoreductase (SQOR) which catalyzes the conversion of H(2)S to thiosulfate, and the sulfur dioxygenase (SDO) which uses GSS(-) as substrate. The thermodynamic coupling of the irreversible SDO and reversible TST reactions provides a model for the physiologically relevant reaction with thiosulfate as the sulfane donor. GSS(-) spontaneously reacts with glutathione to form glutathione disulfide. The sequence is that of Thiosulfate:glutathione sulfurtransferase (TSTD1) from Homo sapiens (Human).